Here is a 223-residue protein sequence, read N- to C-terminus: Deoxyribose-phosphate aldolase (223 aa).

The active-site Proton donor/acceptor is Asp89. Lys152 acts as the Schiff-base intermediate with acetaldehyde in catalysis. Lys181 serves as the catalytic Proton donor/acceptor.

It belongs to the DeoC/FbaB aldolase family. DeoC type 1 subfamily.

The protein resides in the cytoplasm. The catalysed reaction is 2-deoxy-D-ribose 5-phosphate = D-glyceraldehyde 3-phosphate + acetaldehyde. Its pathway is carbohydrate degradation; 2-deoxy-D-ribose 1-phosphate degradation; D-glyceraldehyde 3-phosphate and acetaldehyde from 2-deoxy-alpha-D-ribose 1-phosphate: step 2/2. In terms of biological role, catalyzes a reversible aldol reaction between acetaldehyde and D-glyceraldehyde 3-phosphate to generate 2-deoxy-D-ribose 5-phosphate. In Bacillus mycoides (strain KBAB4) (Bacillus weihenstephanensis), this protein is Deoxyribose-phosphate aldolase.